The sequence spans 440 residues: Trigger factor (440 aa).

The region spanning glycine 163–proline 248 is the PPIase FKBP-type domain.

Belongs to the FKBP-type PPIase family. Tig subfamily.

It localises to the cytoplasm. The enzyme catalyses [protein]-peptidylproline (omega=180) = [protein]-peptidylproline (omega=0). Its function is as follows. Involved in protein export. Acts as a chaperone by maintaining the newly synthesized protein in an open conformation. Functions as a peptidyl-prolyl cis-trans isomerase. This is Trigger factor from Solidesulfovibrio magneticus (strain ATCC 700980 / DSM 13731 / RS-1) (Desulfovibrio magneticus).